The primary structure comprises 337 residues: Protein BIG GRAIN 1-like (337 aa).

Disordered regions lie at residues 1–32 (MRDM…PSFS), 120–163 (SAAG…RPAS), and 179–233 (KRPS…ARPS). The segment covering 137–146 (HEQPDVEKTA) has biased composition (basic and acidic residues). Low complexity-rich tracts occupy residues 150–163 (PGSA…RPAS), 195–209 (PACS…SSYA), and 219–230 (RTPPTTTTTARA).

This sequence belongs to the BIG GRAIN 1 (BG1) plant protein family.

The protein localises to the cell membrane. Involved in auxin transport. Regulator of the auxin signaling pathway. This is Protein BIG GRAIN 1-like from Oryza sativa subsp. indica (Rice).